The following is a 459-amino-acid chain: 2-(3-amino-3-carboxypropyl)histidine synthase subunit 1 (459 aa).

The segment at 1–68 (MEDDRAQVDL…AGANTSIEDS (68 aa)) is disordered. The segment covering 41–61 (SAAAGKSSSSSSNSTSQPAGA) has biased composition (low complexity). [4Fe-4S] cluster-binding residues include C165, C268, and C403.

The protein belongs to the DPH1/DPH2 family. DPH1 subfamily. Component of the 2-(3-amino-3-carboxypropyl)histidine synthase complex composed of dph-1, dph-2, dph-3 and a NADH-dependent reductase, predominantly cbr-1. It depends on [4Fe-4S] cluster as a cofactor.

The protein localises to the cytoplasm. The enzyme catalyses L-histidyl-[translation elongation factor 2] + S-adenosyl-L-methionine = 2-[(3S)-amino-3-carboxypropyl]-L-histidyl-[translation elongation factor 2] + S-methyl-5'-thioadenosine + H(+). The protein operates within protein modification; peptidyl-diphthamide biosynthesis. Its function is as follows. Catalyzes the first step of diphthamide biosynthesis, a post-translational modification of histidine which occurs in elongation factor 2. Dph-1 and dph-2 transfer a 3-amino-3-carboxypropyl (ACP) group from S-adenosyl-L-methionine (SAM) to a histidine residue, the reaction is assisted by a reduction system comprising dph-3 and a NADH-dependent reductase, predominantly cbr-1. This is 2-(3-amino-3-carboxypropyl)histidine synthase subunit 1 (dph-1) from Neurospora crassa (strain ATCC 24698 / 74-OR23-1A / CBS 708.71 / DSM 1257 / FGSC 987).